Reading from the N-terminus, the 259-residue chain is Bacillaene synthase dehydratase PksH (259 aa).

Residues Asp-68 and Glu-137 contribute to the active site.

Belongs to the enoyl-CoA hydratase/isomerase family.

The protein resides in the cytoplasm. It participates in antibiotic biosynthesis; bacillaene biosynthesis. Involved in some intermediate steps for the synthesis of the antibiotic polyketide bacillaene which is involved in secondary metabolism. Catalyzes the dehydration of the (S)-3-hydroxy-3-methylglutaryl group tethered to PksL to a 3-methylglutaconyl moiety. The chain is Bacillaene synthase dehydratase PksH (pksH) from Bacillus subtilis (strain 168).